A 201-amino-acid chain; its full sequence is UPF0301 protein Avi_1069 (201 aa).

It belongs to the UPF0301 (AlgH) family.

The protein is UPF0301 protein Avi_1069 of Allorhizobium ampelinum (strain ATCC BAA-846 / DSM 112012 / S4) (Agrobacterium vitis (strain S4)).